The primary structure comprises 759 residues: TY1 enhancer activator (759 aa).

The tract at residues 1-61 is disordered; that stretch reads MTAPLWPNKN…GTGANTLTNG (61 aa). T22 is subject to Phosphothreonine. Low complexity predominate over residues 30 to 51; that stretch reads SSTNASSNEENSRSSSAANVRS. A DNA-binding region (zn(2)-C6 fungal-type) is located at residues 70 to 96; it reads CTNCRNRRKKCDLGFPCGNCSRLELVC. A disordered region spans residues 229–254; that stretch reads LTPQGEKKKKPLVKGSLYPEGPVSYK. The 9aaTAD motif lies at 744–752; it reads DDLIRELFG. The residue at position 755 (T755) is a Phosphothreonine.

The protein localises to the nucleus. Its function is as follows. TY1 element enhancer binding protein. Binds to the DNA sequence 5'-TCGGTGGTATTATTCCGA-3'. In Saccharomyces cerevisiae (strain ATCC 204508 / S288c) (Baker's yeast), this protein is TY1 enhancer activator (TEA1).